A 432-amino-acid chain; its full sequence is Tol-Pal system protein TolB (432 aa).

The first 29 residues, 1–29 (MMRNVWKSGLRRSAWIGLLMVLCVGVARA), serve as a signal peptide directing secretion.

The protein belongs to the TolB family. As to quaternary structure, the Tol-Pal system is composed of five core proteins: the inner membrane proteins TolA, TolQ and TolR, the periplasmic protein TolB and the outer membrane protein Pal. They form a network linking the inner and outer membranes and the peptidoglycan layer.

It is found in the periplasm. Part of the Tol-Pal system, which plays a role in outer membrane invagination during cell division and is important for maintaining outer membrane integrity. The chain is Tol-Pal system protein TolB from Ralstonia nicotianae (strain ATCC BAA-1114 / GMI1000) (Ralstonia solanacearum).